Consider the following 149-residue polypeptide: Transcriptional regulator MraZ (149 aa).

SpoVT-AbrB domains lie at 7-54 (KYVN…GISH) and 83-126 (AVQL…QPQN).

This sequence belongs to the MraZ family. In terms of assembly, forms oligomers.

It localises to the cytoplasm. The protein localises to the nucleoid. The protein is Transcriptional regulator MraZ of Rickettsia peacockii (strain Rustic).